The chain runs to 356 residues: Peptide chain release factor 1 (356 aa).

Position 234 is an N5-methylglutamine (Gln-234).

This sequence belongs to the prokaryotic/mitochondrial release factor family. Post-translationally, methylated by PrmC. Methylation increases the termination efficiency of RF1.

The protein resides in the cytoplasm. Peptide chain release factor 1 directs the termination of translation in response to the peptide chain termination codons UAG and UAA. The sequence is that of Peptide chain release factor 1 from Exiguobacterium sp. (strain ATCC BAA-1283 / AT1b).